The following is a 332-amino-acid chain: MMSKIDLDISNLPDTTISVREVFGIDTDLRVPAYSKGDAYVPDLDPDYLFDRETTLAILAGFAHNRRVMVSGYHGTGKSTHIEQVAARLNWPCVRVNLDSHVSRIDLVGKDAIVVKDGLQVTEFKDGILPWAYQHNVALVFDEYDAGRPDVMFVIQRVLESSGRLTLLDQSRVIRPHPAFRLFATANTVGLGDTTGLYHGTQQINQAQMDRWSIVTTLNYLPHDKEVDIVAAKVKGFTADKGRETVSKMVRVADLTRAAFINGDLSTVMSPRTVITWAENAHIFGDIAFAFRVTFLNKCDELERALVAEHYQRAFGIELKECAANIVLEATA.

Heterotrimer of CobN, CobS and CobT.

The protein localises to the cytoplasm. The catalysed reaction is hydrogenobyrinate a,c-diamide + Co(2+) + ATP + H2O = cob(II)yrinate a,c diamide + ADP + phosphate + 5 H(+). It participates in cofactor biosynthesis; adenosylcobalamin biosynthesis; cob(II)yrinate a,c-diamide from precorrin-2 (aerobic route): step 10/10. Functionally, catalyzes cobalt insertion in the corrin ring. This Sinorhizobium sp protein is Aerobic cobaltochelatase subunit CobS (cobS).